Reading from the N-terminus, the 73-residue chain is Large ribosomal subunit protein bL31 (73 aa).

It belongs to the bacterial ribosomal protein bL31 family. Type A subfamily. Part of the 50S ribosomal subunit.

In terms of biological role, binds the 23S rRNA. This chain is Large ribosomal subunit protein bL31, found in Sinorhizobium fredii (strain NBRC 101917 / NGR234).